We begin with the raw amino-acid sequence, 322 residues long: Transaldolase (322 aa).

Lys136 functions as the Schiff-base intermediate with substrate in the catalytic mechanism.

The protein belongs to the transaldolase family. Type 1 subfamily. In terms of assembly, homodimer.

The protein resides in the cytoplasm. It carries out the reaction D-sedoheptulose 7-phosphate + D-glyceraldehyde 3-phosphate = D-erythrose 4-phosphate + beta-D-fructose 6-phosphate. Its pathway is carbohydrate degradation; pentose phosphate pathway; D-glyceraldehyde 3-phosphate and beta-D-fructose 6-phosphate from D-ribose 5-phosphate and D-xylulose 5-phosphate (non-oxidative stage): step 2/3. Transaldolase is important for the balance of metabolites in the pentose-phosphate pathway. The chain is Transaldolase from Xanthomonas euvesicatoria pv. vesicatoria (strain 85-10) (Xanthomonas campestris pv. vesicatoria).